A 430-amino-acid chain; its full sequence is Adenylosuccinate synthetase (430 aa).

GTP-binding positions include Gly-12 to Lys-18 and Gly-40 to Thr-42. Asp-13 (proton acceptor) is an active-site residue. Mg(2+) contacts are provided by Asp-13 and Gly-40. Residues Asp-13–Lys-16, Asn-38–His-41, Thr-128, Arg-142, Gln-223, Thr-238, and Arg-302 contribute to the IMP site. Catalysis depends on His-41, which acts as the Proton donor. Residue Thr-298–Arg-304 coordinates substrate. GTP-binding positions include Arg-304, Ser-330 to Asp-332, and Ser-412 to Gly-414.

It belongs to the adenylosuccinate synthetase family. In terms of assembly, homodimer. The cofactor is Mg(2+).

The protein localises to the cytoplasm. It catalyses the reaction IMP + L-aspartate + GTP = N(6)-(1,2-dicarboxyethyl)-AMP + GDP + phosphate + 2 H(+). Its pathway is purine metabolism; AMP biosynthesis via de novo pathway; AMP from IMP: step 1/2. In terms of biological role, plays an important role in the de novo pathway of purine nucleotide biosynthesis. Catalyzes the first committed step in the biosynthesis of AMP from IMP. This Streptococcus gordonii (strain Challis / ATCC 35105 / BCRC 15272 / CH1 / DL1 / V288) protein is Adenylosuccinate synthetase.